The sequence spans 474 residues: UDP-N-acetylmuramoylalanine--D-glutamate ligase (474 aa).

134 to 140 (GSNGKST) serves as a coordination point for ATP.

It belongs to the MurCDEF family.

The protein localises to the cytoplasm. It carries out the reaction UDP-N-acetyl-alpha-D-muramoyl-L-alanine + D-glutamate + ATP = UDP-N-acetyl-alpha-D-muramoyl-L-alanyl-D-glutamate + ADP + phosphate + H(+). It participates in cell wall biogenesis; peptidoglycan biosynthesis. Cell wall formation. Catalyzes the addition of glutamate to the nucleotide precursor UDP-N-acetylmuramoyl-L-alanine (UMA). The polypeptide is UDP-N-acetylmuramoylalanine--D-glutamate ligase (Thiobacillus denitrificans (strain ATCC 25259 / T1)).